A 750-amino-acid chain; its full sequence is Sulfhydryl oxidase 1 (750 aa).

Residues 1–32 form the signal peptide; the sequence is MGRCNRGSGPPSSLLLLLLLLLWLLAVPGASA. Positions 39-159 constitute a Thioredoxin domain; sequence YSPSDPLTLL…RERLIDALES (121 aa). Catalysis depends on nucleophile residues cysteine 73 and cysteine 76. Intrachain disulfides connect cysteine 73-cysteine 76 and cysteine 104-cysteine 113. Residues asparagine 133 and asparagine 246 are each glycosylated (N-linked (GlcNAc...) asparagine). A disulfide bridge connects residues cysteine 396 and cysteine 408. The ERV/ALR sulfhydryl oxidase domain maps to 399-506; that stretch reads SEPHFRGFPC…EDPQFPKVQW (108 aa). FAD contacts are provided by arginine 404, tryptophan 411, and histidine 415. Serine 429 carries the phosphoserine modification. Cysteine 452 and cysteine 455 are joined by a disulfide. FAD-binding positions include aspartate 454, histidine 458, 481-488, lysine 503, and tryptophan 506; that span reads WSSHNRVN. Cysteine 512 and cysteine 515 are disulfide-bonded. An N-linked (GlcNAc...) asparagine glycan is attached at asparagine 578. The segment at 578-645 is disordered; the sequence is NSTVDLGKPE…REQPRGQWHL (68 aa). Residues 624–639 are compositionally biased toward basic and acidic residues; sequence PPEHMAELQTNEREQP. A helical transmembrane segment spans residues 713-733; sequence ISLCVGLYSLSFMGLLAMYAY.

It belongs to the quiescin-sulfhydryl oxidase (QSOX) family. Monomer. FAD serves as cofactor. N-glycosylated. O-glycosylated on Thr and Ser residues.

It is found in the golgi apparatus membrane. The protein resides in the secreted. It catalyses the reaction 2 R'C(R)SH + O2 = R'C(R)S-S(R)CR' + H2O2. In terms of biological role, catalyzes the oxidation of sulfhydryl groups in peptide and protein thiols to disulfides with the reduction of oxygen to hydrogen peroxide. Plays a role in disulfide bond formation in a variety of extracellular proteins. In fibroblasts, required for normal incorporation of laminin into the extracellular matrix, and thereby for normal cell-cell adhesion and cell migration. This chain is Sulfhydryl oxidase 1 (QSOX1), found in Pongo abelii (Sumatran orangutan).